A 405-amino-acid chain; its full sequence is L-rhamnonate dehydratase (405 aa).

Substrate contacts are provided by His33 and Arg59. Residues Asp226, Glu252, and Glu280 each coordinate Mg(2+). His329 functions as the Proton acceptor in the catalytic mechanism. Glu349 is a substrate binding site.

This sequence belongs to the mandelate racemase/muconate lactonizing enzyme family. RhamD subfamily. As to quaternary structure, homooctamer; tetramer of dimers. The cofactor is Mg(2+).

The catalysed reaction is L-rhamnonate = 2-dehydro-3-deoxy-L-rhamnonate + H2O. Functionally, catalyzes the dehydration of L-rhamnonate to 2-keto-3-deoxy-L-rhamnonate (KDR). This is L-rhamnonate dehydratase from Escherichia coli O6:H1 (strain CFT073 / ATCC 700928 / UPEC).